Reading from the N-terminus, the 132-residue chain is Small ribosomal subunit protein uS8 (132 aa).

This sequence belongs to the universal ribosomal protein uS8 family. Part of the 30S ribosomal subunit. Contacts proteins S5 and S12.

Its function is as follows. One of the primary rRNA binding proteins, it binds directly to 16S rRNA central domain where it helps coordinate assembly of the platform of the 30S subunit. The sequence is that of Small ribosomal subunit protein uS8 from Syntrophomonas wolfei subsp. wolfei (strain DSM 2245B / Goettingen).